The primary structure comprises 420 residues: MAPQPLRGLVPFLLWCLSLFLSLPGPVWLQPSPPPHSAPRAEPHPCHTCRALVDSFNKGLERTIRDNFGGGNTAWEEEKLSKYKDSETRLVEVLEGVCSKSDFECHRLLELSEELVEAWWFHRQQEAPDLFQWLCSDSLKLCCPSGTFGPSCLPCPGGTERPCGGYGQCEGEGTRGGSGHCDCQAGYGGEACGQCGLGYFEAERNSSHLVCSACFGPCARCTGPEESHCLQCRKGWALHHLKCVDIDECGTEQATCGAAQFCVNTEGSYECRDCAKACLGCMGAGPGRCKKCSRGYQQVGSKCLDVDECETVVCPGENEQCENTEGSYRCVCAEGFRQEDGICVKEQIPESAGFFAEMTEDEMVVLQQMFFGVIICALATLAAKGDLVFTAIFIGAVAAMTGYWLSERSDRVLEGFIKGR.

An N-terminal signal peptide occupies residues M1–L29. The Extracellular portion of the chain corresponds to Q30 to E362. Residues C46 to C49 carry the CXXC motif. Cystine bridges form between C46/C49, C155/C169, C163/C181, and C183/C192. One can recognise an EGF-like 1 domain in the interval L153–G193. N-linked (GlcNAc...) asparagine glycosylation occurs at N205. FU repeat units follow at residues H208 to T255 and S268 to P315. The CXXC motif lies at C278–C281. 4 disulfides stabilise this stretch: C278/C281, C309/C321, C314/C330, and C332/C343. An EGF-like 2; calcium-binding domain is found at D305 to I342. The chain crosses the membrane as a helical span at residues M363–A383. Residue K384 is a topological domain, cytoplasmic. Residues G385–L405 form a helical membrane-spanning segment. At S406 to R420 the chain is on the extracellular side.

Belongs to the CRELD family.

Its subcellular location is the membrane. The enzyme catalyses Catalyzes the rearrangement of -S-S- bonds in proteins.. Protein disulfide isomerase. Promotes the localization of acetylcholine receptors (AChRs) to the plasma membrane. The protein is Protein disulfide isomerase Creld1 (Creld1) of Rattus norvegicus (Rat).